The primary structure comprises 56 residues: Meucin-25 (56 aa).

Positions 1 to 31 (MFRIEYSLVQLLLRNVTIPLLLIIQMHIMSS) are cleaved as a signal peptide.

Belongs to the non-disulfide-bridged peptide (NDBP) superfamily. Antimalarial peptide (group 5) family. Expressed by the venom gland.

The protein localises to the secreted. This synthetic cationic peptide inhibits the development of Plasmodium berghei ookinetes, kills intraerythrocytic P.falciparum, and is cytotoxic to the Drosophila S2 cell at micromolar concentrations. No antibacterial, antifungal and hemolytic activities have been found at micromolar concentrations. The polypeptide is Meucin-25 (Mesobuthus eupeus (Lesser Asian scorpion)).